A 411-amino-acid chain; its full sequence is Putative competence-damage inducible protein (411 aa).

The protein belongs to the CinA family.

This Alkaliphilus metalliredigens (strain QYMF) protein is Putative competence-damage inducible protein.